Consider the following 483-residue polypeptide: UDP-N-acetylmuramate--L-alanine ligase (483 aa).

125-131 is a binding site for ATP; sequence GTHGKTT.

It belongs to the MurCDEF family.

It is found in the cytoplasm. It catalyses the reaction UDP-N-acetyl-alpha-D-muramate + L-alanine + ATP = UDP-N-acetyl-alpha-D-muramoyl-L-alanine + ADP + phosphate + H(+). It participates in cell wall biogenesis; peptidoglycan biosynthesis. Cell wall formation. The chain is UDP-N-acetylmuramate--L-alanine ligase from Pseudoalteromonas translucida (strain TAC 125).